Consider the following 326-residue polypeptide: MRLLRPTPRLSSIFSSKTATSNLRFFTAMAPHNDVGAFHEALRSSKRILALCGAGLSASSGLPTFRGAGGLWRNHDATSLATLSAFKNDPGLVWLFYNYRRHMCLRAEPNPAHYALAALAEKNKDFLCLTQNVDNLSQQAGHPQDQLRTLHGSLFDIKCTNCDWIQRGNYDDPFCPALAPASVDVEPGKPFPLLDASLPLDPISPDDIPKCPQCKIGFQRPGVVWFGENLDEVMMMGITNWLLEDKVDLMLVIGTSAQVYPAAGYIDKAKRKGARIAVINPEAENEEEMYKVKPGDFAFGKDAAEYLPLLLEPVIGKLETDKKERS.

A mitochondrion-targeting transit peptide spans 1–26; the sequence is MRLLRPTPRLSSIFSSKTATSNLRFF. Positions 28-324 constitute a Deacetylase sirtuin-type domain; that stretch reads AMAPHNDVGA…IGKLETDKKE (297 aa). 53–72 lines the NAD(+) pocket; sequence GAGLSASSGLPTFRGAGGLW. Tyrosine 97 and arginine 100 together coordinate substrate. The active-site Proton acceptor is the histidine 151. The Zn(2+) site is built by cysteine 159, cysteine 162, cysteine 211, and cysteine 214.

This sequence belongs to the sirtuin family. Class I subfamily. In terms of assembly, interacts with LAT1; the interaction is direct. The cofactor is Zn(2+).

Its subcellular location is the mitochondrion. It localises to the cytoplasm. It is found in the cytosol. The protein localises to the nucleus. The protein resides in the chromosome. It carries out the reaction N(6)-acetyl-L-lysyl-[protein] + NAD(+) + H2O = 2''-O-acetyl-ADP-D-ribose + nicotinamide + L-lysyl-[protein]. The enzyme catalyses N(6)-(2E)-butenoyl-L-lysyl-[protein] + H2O = (2E)-2-butenoate + L-lysyl-[protein]. Functionally, NAD-dependent protein-lysine deacylase that decrotonylates the PDC (pyruvate dehydrogenase complex) subunit LAT1 at 'Lys-148' to inhibit PDC activity and consequently ATP production. Also decrotonylates histone H3 crotonylated at 'Lys-18' (H3K18cr), to repress the expression of genes involved in aerobic respiration. May also act as a NAD-dependent deacetylase. Does not mediate desuccinylation, demalonylation, or deglutarylation of LAT1. The polypeptide is NAD-dependent protein deacylase SIR5 (Fusarium oxysporum f. sp. lycopersici (strain 4287 / CBS 123668 / FGSC 9935 / NRRL 34936) (Fusarium vascular wilt of tomato)).